We begin with the raw amino-acid sequence, 51 residues long: UPF0391 membrane protein Psyc_0130 (51 aa).

The next 2 membrane-spanning stretches (helical) occupy residues 6-26 (IIFA…VAGL) and 28-47 (ANFA…VAFV).

Belongs to the UPF0391 family.

It is found in the cell membrane. In Psychrobacter arcticus (strain DSM 17307 / VKM B-2377 / 273-4), this protein is UPF0391 membrane protein Psyc_0130.